Here is a 404-residue protein sequence, read N- to C-terminus: Beta-ketoacyl-[acyl-carrier-protein] synthase III, chloroplastic (404 aa).

The transit peptide at 1–43 (MANASGFFTHPSIPNLRSRIHVPVRVSGSGFCVSNRFSKRVLC) directs the protein to the chloroplast. Residues C179, H330, and N360 contribute to the active site.

Belongs to the thiolase-like superfamily. FabH family.

It is found in the plastid. It localises to the chloroplast. The catalysed reaction is malonyl-[ACP] + acetyl-CoA + H(+) = 3-oxobutanoyl-[ACP] + CO2 + CoA. It functions in the pathway lipid metabolism; fatty acid biosynthesis. Functionally, catalyzes the condensation reaction of fatty acid synthesis by the addition to an acyl acceptor of two carbons from malonyl-ACP. KAS III catalyzes the first condensation reaction which initiates fatty acid synthesis and may therefore play a role in governing the total rate of fatty acid production. Possesses both acetoacetyl-ACP synthase and acetyl transacylase activities. This chain is Beta-ketoacyl-[acyl-carrier-protein] synthase III, chloroplastic, found in Arabidopsis thaliana (Mouse-ear cress).